A 119-amino-acid chain; its full sequence is Polyhedrin (119 aa).

This sequence belongs to the polyhedrin family.

Its function is as follows. Major component of the virus occlusion bodies, which are large proteinaceous structures (polyhedra), that protect the virus from the outside environment for extended periods until they are ingested by insect larvae. This Antheraea pernyi nuclear polyhedrosis virus (ApNPV) protein is Polyhedrin (PH).